Reading from the N-terminus, the 262-residue chain is Flap endonuclease Xni (262 aa).

Asp-112 is a binding site for Mg(2+). The 5'-3' exonuclease domain maps to 171–258 (QQLNDYWAIT…GFNLKDLRYT (88 aa)). The K(+) site is built by Ile-179, Val-190, and Ile-193. Positions 192–197 (GIGSKG) are interaction with DNA.

It belongs to the Xni family. Mg(2+) serves as cofactor. K(+) is required as a cofactor.

Its function is as follows. Has flap endonuclease activity. During DNA replication, flap endonucleases cleave the 5'-overhanging flap structure that is generated by displacement synthesis when DNA polymerase encounters the 5'-end of a downstream Okazaki fragment. This is Flap endonuclease Xni from Psychromonas ingrahamii (strain DSM 17664 / CCUG 51855 / 37).